Here is a 590-residue protein sequence, read N- to C-terminus: Polypeptide N-acetylgalactosaminyltransferase 8 (590 aa).

The Cytoplasmic portion of the chain corresponds to 1–11 (MCLDIWRHKKK). A helical; Signal-anchor for type II membrane protein transmembrane segment spans residues 12 to 31 (VLPLLLLMAIGSIIYYLYTL). The Lumenal portion of the chain corresponds to 32 to 590 (KLEGERDESA…QHFWDNVKTQ (559 aa)). N-linked (GlcNAc...) asparagine glycosylation occurs at asparagine 77. 5 disulfides stabilise this stretch: cysteine 117-cysteine 345, cysteine 336-cysteine 419, cysteine 459-cysteine 475, cysteine 502-cysteine 517, and cysteine 546-cysteine 561. The tract at residues 127-236 (LPSVSVVITY…KGWLEPLIAP (110 aa)) is catalytic subdomain A. Substrate is bound at residue aspartate 168. Mn(2+) is bound at residue aspartate 220. Serine 221 is a binding site for substrate. Histidine 222 lines the Mn(2+) pocket. The N-linked (GlcNAc...) asparagine glycan is linked to asparagine 241. The segment at 291–353 (PHKNPIMNGG…PCSRVGHLFR (63 aa)) is catalytic subdomain B. Tryptophan 322 is a substrate binding site. Histidine 350 contacts Mn(2+). Arginine 353 contributes to the substrate binding site. Residues 446–573 (ASGVLQSISS…KNHKQQWKFG (128 aa)) form the Ricin B-type lectin domain.

It belongs to the glycosyltransferase 2 family. GalNAc-T subfamily. Mn(2+) is required as a cofactor. In terms of tissue distribution, expressed in developing oocytes and egg chambers. During embryonic stages 9-11, expressed in the primordium of the foregut, midgut and hindgut. During embryonic stages 12-13, expressed in the posterior midgut and hindgut. During embryonic stages 14-15, expression continues in the hindgut. No expression detected during embryonic stages 16-17 or in third instar larvae imaginal disks.

It is found in the golgi apparatus membrane. It catalyses the reaction L-seryl-[protein] + UDP-N-acetyl-alpha-D-galactosamine = a 3-O-[N-acetyl-alpha-D-galactosaminyl]-L-seryl-[protein] + UDP + H(+). The enzyme catalyses L-threonyl-[protein] + UDP-N-acetyl-alpha-D-galactosamine = a 3-O-[N-acetyl-alpha-D-galactosaminyl]-L-threonyl-[protein] + UDP + H(+). Its pathway is protein modification; protein glycosylation. In terms of biological role, catalyzes the initial reaction in O-linked oligosaccharide biosynthesis, the transfer of an N-acetyl-D-galactosamine residue to a serine or threonine residue on the protein receptor. It can both act as a peptide transferase that transfers GalNAc onto unmodified peptide substrates, and as a glycopeptide transferase that requires the prior addition of a GalNAc on a peptide before adding additional GalNAc moieties. Prefers both EA2 and the diglycosylated Muc5AC-3/13 as substrates, albeit at very low levels fro Muc5AC-3/13. The protein is Polypeptide N-acetylgalactosaminyltransferase 8 of Drosophila melanogaster (Fruit fly).